Here is a 572-residue protein sequence, read N- to C-terminus: Solute carrier family 22 member 16 (572 aa).

A helical transmembrane segment spans residues I21–S41. Residue N57 is glycosylated (N-linked (GlcNAc...) asparagine). 5 consecutive transmembrane segments (helical) span residues L156–S176, L183–F203, F208–V228, I244–V264, and W268–L288. N315 is a glycosylation site (N-linked (GlcNAc...) asparagine). Helical transmembrane passes span T359 to N379, L389 to M409, N416 to P436, V441 to I461, L476 to I496, and I503 to L523. An N-linked (GlcNAc...) asparagine glycan is attached at N559.

It belongs to the major facilitator (TC 2.A.1) superfamily. Organic cation transporter (TC 2.A.1.19) family.

It is found in the cell membrane. The catalysed reaction is (R)-carnitine(in) = (R)-carnitine(out). It carries out the reaction spermidine(in) = spermidine(out). Its function is as follows. Facilitative organic cation transporter that mediates the transport of carnitine as well as the polyamine spermidine. Mediates the partially Na(+)-dependent bidirectional transport of carnitine. May mediate L-carnitine secretion from testis epididymal epithelium into the lumen which is involved in the maturation of spermatozoa. This Bos taurus (Bovine) protein is Solute carrier family 22 member 16 (SLC22A16).